The chain runs to 425 residues: Protein translocase subunit SecY (425 aa).

Transmembrane regions (helical) follow at residues 15–35 (LLSL…VPGI), 62–82 (TVVV…SIIM), 113–131 (LLTL…FYLK), 139–159 (LVLA…VLWL), 168–188 (LGNG…PGFV), 201–221 (IGSW…IVLL), 266–286 (PIIL…LGLL), 304–324 (IIYW…YSTI), 364–384 (LLGA…QAIL), and 385–405 (SLSG…GVIL).

It belongs to the SecY/SEC61-alpha family. In terms of assembly, component of the plastid Sec protein translocase complex, which is composed of at least SecY, SecE and SecG.

The protein localises to the plastid. The protein resides in the chloroplast thylakoid membrane. Functionally, the central subunit of the protein translocation channel SecYE. Consists of two halves formed by TMs 1-5 and 6-10. These two domains form a lateral gate at the front which open onto the bilayer between TMs 2 and 7, and are clamped together by SecE at the back. The channel is closed by both a pore ring composed of hydrophobic SecY resides and a short helix (helix 2A) on the extracellular side of the membrane which forms a plug. In Trieres chinensis (Marine centric diatom), this protein is Protein translocase subunit SecY.